Consider the following 379-residue polypeptide: L-lactate dehydrogenase (379 aa).

Residues 1–379 (MIISSSTDYR…ISPDSLVRGL (379 aa)) enclose the FMN hydroxy acid dehydrogenase domain. Tyr24 contributes to the substrate binding site. Residues Ser106 and Gln127 each contribute to the FMN site. Residue Tyr129 participates in substrate binding. Thr155 lines the FMN pocket. Arg164 is a substrate binding site. Residue Lys251 participates in FMN binding. His275 (proton acceptor) is an active-site residue. Residue Arg278 participates in substrate binding. 306 to 330 (DSGIRSGLDVVRMIAQGADGVLIGR) is a binding site for FMN.

This sequence belongs to the FMN-dependent alpha-hydroxy acid dehydrogenase family. It depends on FMN as a cofactor.

It is found in the cell inner membrane. It carries out the reaction (S)-lactate + A = pyruvate + AH2. Its function is as follows. Catalyzes the conversion of L-lactate to pyruvate. Is coupled to the respiratory chain. The polypeptide is L-lactate dehydrogenase (Allorhizobium ampelinum (strain ATCC BAA-846 / DSM 112012 / S4) (Agrobacterium vitis (strain S4))).